Consider the following 425-residue polypeptide: Protein PTI1 (425 aa).

Residue S272 is modified to Phosphoserine.

As to quaternary structure, component of the cleavage and polyadenylation factor (CPF) complex, which is composed of PTI1, SYC1, SSU72, GLC7, MPE1, REF2, PFS2, PTA1, YSH1/BRR5, SWD2, CFT2/YDH1, YTH1, CFT1/YHH1, FIP1 and PAP1. Component of the APT complex, which is a subcomplex of CPF, and is composed of PTI1, SYC1, SSU72, GLC7, REF2, PTA1 and SWD2.

It localises to the nucleus. Component of the cleavage and polyadenylation factor (CPF) complex, which plays a key role in polyadenylation-dependent pre-mRNA 3'-end formation and cooperates with cleavage factors including the CFIA complex and NAB4/CFIB. Component of the APT complex, which may be involved in polyadenylation-independent transcript 3'-end formation. PTI1 is required for 3'-end formation of snoRNAs. The polypeptide is Protein PTI1 (PTI1) (Saccharomyces cerevisiae (strain ATCC 204508 / S288c) (Baker's yeast)).